The sequence spans 494 residues: Ribonuclease H (494 aa).

Disordered regions lie at residues N79–P148 and R205–R231. Composition is skewed to polar residues over residues G84 to A100 and P131 to S143. The region spanning S272–R488 is the RNase H type-1 domain. 4 residues coordinate Mg(2+): D281, E325, D374, and D480.

This sequence belongs to the RNase H family. Monomer. Requires Mg(2+) as cofactor.

The catalysed reaction is Endonucleolytic cleavage to 5'-phosphomonoester.. Functionally, endonuclease that specifically degrades the RNA of RNA-DNA hybrids. In Crithidia fasciculata, this protein is Ribonuclease H (RNH1).